Here is a 379-residue protein sequence, read N- to C-terminus: MKLKFELKKKNGNARRGQLIFERGTVQTPAFMPVGTYGTVKGMTPEEVKETGAQILLGNTFHLWLRPGQEVMKMHGDLHDFMNWQGPILTDSGGFQVFSLGDIRKITEEGVHFRNPVNGDKIFMDAEKSMEIQKDLGSDIVMIFDECTPYPATHDEAKKSMEMSLRWAKRSRDHFDKLENPNNLFGIVQGGVYEDLRDVSVKGLTEIGFDGYAVGGLAVGEPKEDMHRVLEHTCPQLPEDKPRYLMGVGKPEDLVEGVRRGIDMFDCVMPTRNARNGHLFVTGGVIKIRNAAHKTDTTPLDPHCDCYTCKNYSKSYLHHLDRCNEILGARLNTIHNLRYYQRLMESIRKAIDEDRFDQFVAEFYARRNREVPPLQKDKA.

Catalysis depends on Asp-91, which acts as the Proton acceptor. Substrate contacts are provided by residues 91–95 (DSGGF), Asp-145, Gln-189, and Gly-216. An RNA binding region spans residues 247–253 (GVGKPED). Residue Asp-266 is the Nucleophile of the active site. Residues 271-275 (TRNAR) form an RNA binding; important for wobble base 34 recognition region. Positions 304, 306, 309, and 335 each coordinate Zn(2+).

The protein belongs to the queuine tRNA-ribosyltransferase family. In terms of assembly, homodimer. Within each dimer, one monomer is responsible for RNA recognition and catalysis, while the other monomer binds to the replacement base PreQ1. It depends on Zn(2+) as a cofactor.

It carries out the reaction 7-aminomethyl-7-carbaguanine + guanosine(34) in tRNA = 7-aminomethyl-7-carbaguanosine(34) in tRNA + guanine. It functions in the pathway tRNA modification; tRNA-queuosine biosynthesis. Its function is as follows. Catalyzes the base-exchange of a guanine (G) residue with the queuine precursor 7-aminomethyl-7-deazaguanine (PreQ1) at position 34 (anticodon wobble position) in tRNAs with GU(N) anticodons (tRNA-Asp, -Asn, -His and -Tyr). Catalysis occurs through a double-displacement mechanism. The nucleophile active site attacks the C1' of nucleotide 34 to detach the guanine base from the RNA, forming a covalent enzyme-RNA intermediate. The proton acceptor active site deprotonates the incoming PreQ1, allowing a nucleophilic attack on the C1' of the ribose to form the product. After dissociation, two additional enzymatic reactions on the tRNA convert PreQ1 to queuine (Q), resulting in the hypermodified nucleoside queuosine (7-(((4,5-cis-dihydroxy-2-cyclopenten-1-yl)amino)methyl)-7-deazaguanosine). This is Queuine tRNA-ribosyltransferase from Vibrio cholerae serotype O1 (strain ATCC 39315 / El Tor Inaba N16961).